The following is a 480-amino-acid chain: Cysteine--tRNA ligase (480 aa).

Cys-29 lines the Zn(2+) pocket. The 'HIGH' region motif lies at Val-31–His-41. Zn(2+) contacts are provided by Cys-209, His-234, and Glu-238. Residues Lys-266 to Ser-270 carry the 'KMSKS' region motif. Lys-269 serves as a coordination point for ATP.

Belongs to the class-I aminoacyl-tRNA synthetase family. In terms of assembly, monomer. Zn(2+) serves as cofactor.

The protein localises to the cytoplasm. It catalyses the reaction tRNA(Cys) + L-cysteine + ATP = L-cysteinyl-tRNA(Cys) + AMP + diphosphate. The polypeptide is Cysteine--tRNA ligase (Geobacter sp. (strain M21)).